The sequence spans 124 residues: Glycine cleavage system H protein (124 aa).

A Lipoyl-binding domain is found at 19-101 (TGTVGITDYA…AGKGWFLQIK (83 aa)). K60 carries the N6-lipoyllysine modification.

Belongs to the GcvH family. In terms of assembly, the glycine cleavage system is composed of four proteins: P, T, L and H. Requires (R)-lipoate as cofactor.

The glycine cleavage system catalyzes the degradation of glycine. The H protein shuttles the methylamine group of glycine from the P protein to the T protein. The protein is Glycine cleavage system H protein of Beijerinckia indica subsp. indica (strain ATCC 9039 / DSM 1715 / NCIMB 8712).